Consider the following 575-residue polypeptide: Proline--tRNA ligase (575 aa).

This sequence belongs to the class-II aminoacyl-tRNA synthetase family. ProS type 1 subfamily. In terms of assembly, homodimer.

It localises to the cytoplasm. It catalyses the reaction tRNA(Pro) + L-proline + ATP = L-prolyl-tRNA(Pro) + AMP + diphosphate. Its function is as follows. Catalyzes the attachment of proline to tRNA(Pro) in a two-step reaction: proline is first activated by ATP to form Pro-AMP and then transferred to the acceptor end of tRNA(Pro). As ProRS can inadvertently accommodate and process non-cognate amino acids such as alanine and cysteine, to avoid such errors it has two additional distinct editing activities against alanine. One activity is designated as 'pretransfer' editing and involves the tRNA(Pro)-independent hydrolysis of activated Ala-AMP. The other activity is designated 'posttransfer' editing and involves deacylation of mischarged Ala-tRNA(Pro). The misacylated Cys-tRNA(Pro) is not edited by ProRS. The protein is Proline--tRNA ligase of Saccharophagus degradans (strain 2-40 / ATCC 43961 / DSM 17024).